Consider the following 511-residue polypeptide: Maturase K (511 aa).

It belongs to the intron maturase 2 family. MatK subfamily.

The protein localises to the plastid. It is found in the chloroplast. Its function is as follows. Usually encoded in the trnK tRNA gene intron. Probably assists in splicing its own and other chloroplast group II introns. This is Maturase K from Nandina domestica (Heavenly bamboo).